Consider the following 232-residue polypeptide: 2-C-methyl-D-erythritol 4-phosphate cytidylyltransferase (232 aa).

Belongs to the IspD/TarI cytidylyltransferase family. IspD subfamily.

It carries out the reaction 2-C-methyl-D-erythritol 4-phosphate + CTP + H(+) = 4-CDP-2-C-methyl-D-erythritol + diphosphate. Its pathway is isoprenoid biosynthesis; isopentenyl diphosphate biosynthesis via DXP pathway; isopentenyl diphosphate from 1-deoxy-D-xylulose 5-phosphate: step 2/6. Its function is as follows. Catalyzes the formation of 4-diphosphocytidyl-2-C-methyl-D-erythritol from CTP and 2-C-methyl-D-erythritol 4-phosphate (MEP). The sequence is that of 2-C-methyl-D-erythritol 4-phosphate cytidylyltransferase from Stenotrophomonas maltophilia (strain R551-3).